The sequence spans 1446 residues: Receptor-type tyrosine-protein phosphatase U (1446 aa).

Residues 1–18 (MARAQALVLALTFQFCAP) form the signal peptide. The Extracellular portion of the chain corresponds to 19–749 (ETETPAAGCT…QRSEEMGLIL (731 aa)). Residues 25 to 188 (AGCTFEEASD…ILLFSYPCAK (164 aa)) enclose the MAM domain. Asparagine 75 is a glycosylation site (N-linked (GlcNAc...) asparagine). The Ig-like C2-type domain occupies 190-275 (PHFSRLGDVE…SQAPRGAGVS (86 aa)). Residues cysteine 210 and cysteine 264 are joined by a disulfide bond. Fibronectin type-III domains follow at residues 288–383 (PIAP…CAEP), 386–484 (APKG…TDED), 485–591 (VPGG…SAPS), and 592–668 (FDYA…FGAE). Asparagine 410 carries N-linked (GlcNAc...) asparagine glycosylation. Asparagine 685 carries an N-linked (GlcNAc...) asparagine glycan. The helical transmembrane segment at 750 to 770 (GICAGGLAVLILLLGAIIVII) threads the bilayer. Residues 771–887 (RKGRDRYAYS…DLLQHINQMK (117 aa)) are mediates interaction with CTNNB1. Residues 771 to 1446 (RKGRDRYAYS…LEYLEALELR (676 aa)) are Cytoplasmic-facing. A disordered region spans residues 830–867 (PGYSPRGDQRSGGVTEASSLLGGSPRRPCGRKGSPYHT). A phosphoserine mark is found at serine 848, serine 853, and serine 863. Position 865 is a phosphotyrosine (tyrosine 865). Tyrosine-protein phosphatase domains are found at residues 888-1144 (TAEG…ILEA) and 1176-1439 (LREE…ALEY). Substrate is bound by residues glutamate 1053, 1085 to 1091 (CSAGTGR), and glutamine 1129. Catalysis depends on cysteine 1085, which acts as the Phosphocysteine intermediate. Cysteine 1380 (phosphocysteine intermediate) is an active-site residue.

This sequence belongs to the protein-tyrosine phosphatase family. Receptor class 2B subfamily. As to quaternary structure, forms homooligomeric complexes which mediate cell homotypic adhesion. Interacts (via the cytoplasmic juxtamembrane domain) with CTNNB1; may mediate interaction with the cadherin/catenin adhesion complex. Interacts with KIT. May interact with AP3B1. Post-translationally, the extracellular domain is proteolytically processed through cleavage within the fibronectin type-III 4 domain. In addition to the 190 kDa full-length protein, proteolytic products of 100 kDa, 80 kDa and 73 kDa are observed. In terms of processing, N-glycosylated. Phosphorylated on tyrosine residues upon activation of KIT with stem cell factor (SCF). The 73 kDa proteolytic product is not phosphorylated. Transcripts of different sizes are differentially expressed in a subset of tissues. Detected in brain, lung, skeletal muscle, heart, kidney and placenta. In brain; expressed in olfactory bulb, cerebral cortex, hippocampus and cerebellum.

The protein resides in the cell junction. It localises to the cell membrane. The catalysed reaction is O-phospho-L-tyrosyl-[protein] + H2O = L-tyrosyl-[protein] + phosphate. Its function is as follows. Tyrosine-protein phosphatase which dephosphorylates CTNNB1. Regulates CTNNB1 function both in cell adhesion and signaling. May function in cell proliferation and migration and play a role in the maintenance of epithelial integrity. May play a role in megakaryocytopoiesis. The sequence is that of Receptor-type tyrosine-protein phosphatase U (Ptpru) from Mus musculus (Mouse).